A 582-amino-acid chain; its full sequence is Inositol transporter 4 (582 aa).

12 consecutive transmembrane segments (helical) span residues Gly-35–Ile-55, Ser-70–Ile-90, Val-105–Val-125, Ile-128–Ala-148, Gly-162–Thr-182, Trp-188–Pro-208, Phe-290–Ala-310, Ala-317–Val-337, Leu-345–Ser-365, Phe-456–Gly-476, Leu-494–Phe-514, and Gly-525–Val-545.

The protein belongs to the major facilitator superfamily. Sugar transporter (TC 2.A.1.1) family. As to expression, highly expressed in pollen and phloem companion cells.

The protein resides in the cell membrane. Plasma membrane inositol-proton symporter. Mediates high-affinity myoinositol-proton symport across the plasma membrane. Active with myoinositol, scylloinositol and D-chiroinositol. Low activity with mucoinositol and alloinositol. The polypeptide is Inositol transporter 4 (INT4) (Arabidopsis thaliana (Mouse-ear cress)).